The primary structure comprises 89 residues: Small ribosomal subunit protein uS17 (89 aa).

The protein belongs to the universal ribosomal protein uS17 family. In terms of assembly, part of the 30S ribosomal subunit.

One of the primary rRNA binding proteins, it binds specifically to the 5'-end of 16S ribosomal RNA. The chain is Small ribosomal subunit protein uS17 from Xylella fastidiosa (strain Temecula1 / ATCC 700964).